A 326-amino-acid chain; its full sequence is Beta-ketoacyl-[acyl-carrier-protein] synthase III (326 aa).

Residues cysteine 111 and histidine 252 contribute to the active site. The interval 253–257 (QANIR) is ACP-binding. Asparagine 282 is an active-site residue.

This sequence belongs to the thiolase-like superfamily. FabH family. In terms of assembly, homodimer.

The protein localises to the plastid. It is found in the chloroplast. It carries out the reaction malonyl-[ACP] + acetyl-CoA + H(+) = 3-oxobutanoyl-[ACP] + CO2 + CoA. It functions in the pathway lipid metabolism; fatty acid biosynthesis. In terms of biological role, catalyzes the condensation reaction of fatty acid synthesis by the addition to an acyl acceptor of two carbons from malonyl-ACP. Catalyzes the first condensation reaction which initiates fatty acid synthesis and may therefore play a role in governing the total rate of fatty acid production. Possesses both acetoacetyl-ACP synthase and acetyl transacylase activities. Its substrate specificity determines the biosynthesis of branched-chain and/or straight-chain of fatty acids. This chain is Beta-ketoacyl-[acyl-carrier-protein] synthase III, found in Porphyra purpurea (Red seaweed).